A 100-amino-acid chain; its full sequence is Large ribosomal subunit protein uL23 (100 aa).

It belongs to the universal ribosomal protein uL23 family. Part of the 50S ribosomal subunit. Contacts protein L29, and trigger factor when it is bound to the ribosome.

Its function is as follows. One of the early assembly proteins it binds 23S rRNA. One of the proteins that surrounds the polypeptide exit tunnel on the outside of the ribosome. Forms the main docking site for trigger factor binding to the ribosome. The protein is Large ribosomal subunit protein uL23 of Buchnera aphidicola subsp. Baizongia pistaciae (strain Bp).